Reading from the N-terminus, the 915-residue chain is Probable serine/threonine-protein kinase dyrk2 (915 aa).

Composition is skewed to low complexity over residues threonine 51–serine 79, serine 108–isoleucine 119, serine 170–serine 185, and serine 196–serine 218. 3 disordered regions span residues threonine 51 to isoleucine 119, phenylalanine 132 to serine 334, and alanine 349 to serine 533. The segment covering proline 234–phenylalanine 260 has biased composition (polar residues). 6 stretches are compositionally biased toward low complexity: residues serine 261–serine 287, serine 300–serine 333, serine 352–valine 364, serine 379–serine 391, serine 399–isoleucine 425, and serine 433–serine 533. The region spanning phenylalanine 605–isoleucine 902 is the Protein kinase domain. Residues leucine 611–valine 619 and lysine 634 contribute to the ATP site. The active-site Proton acceptor is the aspartate 731.

This sequence belongs to the protein kinase superfamily. CMGC Ser/Thr protein kinase family. MNB/DYRK subfamily.

It catalyses the reaction L-seryl-[protein] + ATP = O-phospho-L-seryl-[protein] + ADP + H(+). The enzyme catalyses L-threonyl-[protein] + ATP = O-phospho-L-threonyl-[protein] + ADP + H(+). It carries out the reaction L-tyrosyl-[protein] + ATP = O-phospho-L-tyrosyl-[protein] + ADP + H(+). The chain is Probable serine/threonine-protein kinase dyrk2 (dyrk2) from Dictyostelium discoideum (Social amoeba).